The chain runs to 437 residues: Palmitoyltransferase PFA4 (437 aa).

Topologically, residues 1 to 12 (MAGLNDVPFIKG) are cytoplasmic. A helical transmembrane segment spans residues 13 to 33 (LAVPSVCALIIFLGYASQFLF). Topologically, residues 34–48 (NYSTTLEPGPPTRRE) are lumenal. Residues 49–69 (TIIFNGLLLVLWITYYRTVAT) form a helical membrane-spanning segment. Residues 70–130 (DPGRYIFKDR…RNCVSMTTFP (61 aa)) lie on the Cytoplasmic side of the membrane. Residues 87–137 (RWCNKCAAPKPPRAHHCRHCARCVPRMDHHCPWTRNCVSMTTFPHFLRFLI) form the DHHC domain. The active-site S-palmitoyl cysteine intermediate is cysteine 117. The helical transmembrane segment at 131–151 (HFLRFLIYTNMSLWMLGYFLW) threads the bilayer. At 152 to 173 (QRFSKIWEHRRLPAYLGPSFYG) the chain is on the lumenal side. The chain crosses the membrane as a helical span at residues 174 to 194 (LICLSLISIVNFVTTVALGIM). Topologically, residues 195–437 (LINTVKSWVF…KILKKDGLDD (243 aa)) are cytoplasmic. The interval 377-419 (LDQGLGWVNSDGDRLRDYGVDEEASEPEGVNDDDDDDDDDDVP) is disordered. Over residues 396–419 (VDEEASEPEGVNDDDDDDDDDDVP) the composition is skewed to acidic residues.

It belongs to the DHHC palmitoyltransferase family. PFA4 subfamily.

It is found in the endoplasmic reticulum membrane. The enzyme catalyses L-cysteinyl-[protein] + hexadecanoyl-CoA = S-hexadecanoyl-L-cysteinyl-[protein] + CoA. In terms of biological role, mediates the reversible addition of palmitate to target proteins, thereby regulating their membrane association and biological function. This chain is Palmitoyltransferase PFA4, found in Gibberella zeae (strain ATCC MYA-4620 / CBS 123657 / FGSC 9075 / NRRL 31084 / PH-1) (Wheat head blight fungus).